The primary structure comprises 72 residues: Translation initiation factor IF-1 2 (72 aa).

An S1-like domain is found at 1-72 (MAKDDVIQMQ…SRARIVFRTK (72 aa)).

This sequence belongs to the IF-1 family. Component of the 30S ribosomal translation pre-initiation complex which assembles on the 30S ribosome in the order IF-2 and IF-3, IF-1 and N-formylmethionyl-tRNA(fMet); mRNA recruitment can occur at any time during PIC assembly.

It localises to the cytoplasm. One of the essential components for the initiation of protein synthesis. Stabilizes the binding of IF-2 and IF-3 on the 30S subunit to which N-formylmethionyl-tRNA(fMet) subsequently binds. Helps modulate mRNA selection, yielding the 30S pre-initiation complex (PIC). Upon addition of the 50S ribosomal subunit IF-1, IF-2 and IF-3 are released leaving the mature 70S translation initiation complex. In Cupriavidus metallidurans (strain ATCC 43123 / DSM 2839 / NBRC 102507 / CH34) (Ralstonia metallidurans), this protein is Translation initiation factor IF-1 2.